The sequence spans 366 residues: Cytochrome c peroxidase, mitochondrial (366 aa).

Residue H123 is the Proton acceptor of the active site. A compositionally biased stretch (basic and acidic residues) spans 195 to 206; the sequence is IEWRPGRVDDNT. Positions 195–218 are disordered; that stretch reads IEWRPGRVDDNTASKVPPNGRLPD. Position 247 (H247) interacts with heme b. The Tryptophan radical intermediate role is filled by W263.

This sequence belongs to the peroxidase family. Cytochrome c peroxidase subfamily. Forms a one-to-one complex with cytochrome c. Requires heme b as cofactor.

The protein localises to the mitochondrion matrix. The protein resides in the mitochondrion intermembrane space. The enzyme catalyses 2 Fe(II)-[cytochrome c] + H2O2 + 2 H(+) = 2 Fe(III)-[cytochrome c] + 2 H2O. Its function is as follows. Destroys radicals which are normally produced within the cells and which are toxic to biological systems. This chain is Cytochrome c peroxidase, mitochondrial (CCP1), found in Candida albicans (strain SC5314 / ATCC MYA-2876) (Yeast).